Here is a 140-residue protein sequence, read N- to C-terminus: Large ribosomal subunit protein uL22c (140 aa).

This sequence belongs to the universal ribosomal protein uL22 family. Part of the 50S ribosomal subunit.

The protein resides in the plastid. It localises to the chloroplast. In terms of biological role, this protein binds specifically to 23S rRNA. Its function is as follows. The globular domain of the protein is located near the polypeptide exit tunnel on the outside of the subunit, while an extended beta-hairpin is found that lines the wall of the exit tunnel in the center of the 70S ribosome. The protein is Large ribosomal subunit protein uL22c (rpl22) of Calycanthus floridus var. glaucus (Eastern sweetshrub).